We begin with the raw amino-acid sequence, 491 residues long: Protein nucleotidyltransferase YdiU (491 aa).

The ATP site is built by G88, G90, R91, K111, D123, G124, R174, and R181. Catalysis depends on D250, which acts as the Proton acceptor. Mg(2+) is bound by residues N251 and D260. Position 260 (D260) interacts with ATP.

Belongs to the SELO family. Mg(2+) is required as a cofactor. Mn(2+) serves as cofactor.

It catalyses the reaction L-seryl-[protein] + ATP = 3-O-(5'-adenylyl)-L-seryl-[protein] + diphosphate. The catalysed reaction is L-threonyl-[protein] + ATP = 3-O-(5'-adenylyl)-L-threonyl-[protein] + diphosphate. The enzyme catalyses L-tyrosyl-[protein] + ATP = O-(5'-adenylyl)-L-tyrosyl-[protein] + diphosphate. It carries out the reaction L-histidyl-[protein] + UTP = N(tele)-(5'-uridylyl)-L-histidyl-[protein] + diphosphate. It catalyses the reaction L-seryl-[protein] + UTP = O-(5'-uridylyl)-L-seryl-[protein] + diphosphate. The catalysed reaction is L-tyrosyl-[protein] + UTP = O-(5'-uridylyl)-L-tyrosyl-[protein] + diphosphate. Its function is as follows. Nucleotidyltransferase involved in the post-translational modification of proteins. It can catalyze the addition of adenosine monophosphate (AMP) or uridine monophosphate (UMP) to a protein, resulting in modifications known as AMPylation and UMPylation. The sequence is that of Protein nucleotidyltransferase YdiU from Rhodopseudomonas palustris (strain BisB18).